The chain runs to 339 residues: Anthranilate phosphoribosyltransferase (339 aa).

Residues Gly-81, 84 to 85 (GD), Thr-89, 91 to 94 (NIST), 109 to 117 (KHGNRSVSS), and Ser-121 contribute to the 5-phospho-alpha-D-ribose 1-diphosphate site. Gly-81 provides a ligand contact to anthranilate. Position 93 (Ser-93) interacts with Mg(2+). Asn-112 lines the anthranilate pocket. Anthranilate is bound at residue Arg-165. Mg(2+)-binding residues include Asp-224 and Glu-225.

It belongs to the anthranilate phosphoribosyltransferase family. As to quaternary structure, homodimer. The cofactor is Mg(2+).

It catalyses the reaction N-(5-phospho-beta-D-ribosyl)anthranilate + diphosphate = 5-phospho-alpha-D-ribose 1-diphosphate + anthranilate. Its pathway is amino-acid biosynthesis; L-tryptophan biosynthesis; L-tryptophan from chorismate: step 2/5. Functionally, catalyzes the transfer of the phosphoribosyl group of 5-phosphorylribose-1-pyrophosphate (PRPP) to anthranilate to yield N-(5'-phosphoribosyl)-anthranilate (PRA). The chain is Anthranilate phosphoribosyltransferase from Thermosynechococcus vestitus (strain NIES-2133 / IAM M-273 / BP-1).